The primary structure comprises 123 residues: Cliotide T4 (123 aa).

The N-terminal stretch at 1–28 (MASLRIAPLALFFFLAASVMFTVEKTEA) is a signal peptide. The cyclopeptide (Gly-Asn) cross-link spans 29 to 58 (GIPCGESCVFIPCITAAIGCSCKSKVCYRN). 3 disulfide bridges follow: cysteine 32/cysteine 48, cysteine 36/cysteine 50, and cysteine 41/cysteine 55. Positions 59–123 (HVIAAEAKTM…KDHLKMSITN (65 aa)) are cleaved as a propeptide — removed in mature form.

In terms of processing, contains 3 disulfide bonds. Post-translationally, this is a cyclic peptide. In terms of tissue distribution, expressed in flower, stem, shoot, root, leaf, seed, pod and nodule (at protein level).

Its function is as follows. Probably participates in a plant defense mechanism. Active against Gram-negative bacteria E.coli ATCC 700926 (MIC=1.0 uM), K.pneumoniae ATTC 13883 (MIC=5.5 uM) and P.aeruginosa ATCC 39018 (MIC=7.5 uM). Has hemolytic and cytotoxic activity. The sequence is that of Cliotide T4 from Clitoria ternatea (Butterfly pea).